Consider the following 432-residue polypeptide: MEKITLAPISAVEGTINLPGSKSLSNRALLLAALAKGTTKVTNLLDSDDIRHMLNALKALGVRYQLSDDKTICEVEGLGGTFNIQDNLSLFLGNAGTAMRPLTAALCLKGKTESEIILTGEPRMKERPILHLVDALRQAGADIRYLENEGYPPLAIRNKGIKGGKVKIDGSISSQFLTALLMSAPLAENDTEIEIIGELVSKPYIDITLAMMRDFGVKVENHHYQKFQVKGNQSYISPNKYLVEGDASSASYFLAAGAIKGKVKVTGIGKNSIQGDRLFADVLEKMGAKITWGEDFIQAEHAELNGIDMDMNHIPDAAMTIATTALFSNGETVIRNIYNWRVKETDRLTAMATELRKVGAEVEEGEDFIHIQPLPLNQFKHANIETYNDHRIAMCFSLIALSNTPVTILDPKCTAKTFPTFFSEFEKICLRD.

Residues K22, S23, and R27 each contribute to the 3-phosphoshikimate site. Residue K22 coordinates phosphoenolpyruvate. G96 and R127 together coordinate phosphoenolpyruvate. 3-phosphoshikimate contacts are provided by S173, S174, Q175, S201, D316, N339, and K343. Position 175 (Q175) interacts with phosphoenolpyruvate. Catalysis depends on D316, which acts as the Proton acceptor. R347, R391, and K416 together coordinate phosphoenolpyruvate.

The protein belongs to the EPSP synthase family. In terms of assembly, monomer.

Its subcellular location is the cytoplasm. It catalyses the reaction 3-phosphoshikimate + phosphoenolpyruvate = 5-O-(1-carboxyvinyl)-3-phosphoshikimate + phosphate. Its pathway is metabolic intermediate biosynthesis; chorismate biosynthesis; chorismate from D-erythrose 4-phosphate and phosphoenolpyruvate: step 6/7. In terms of biological role, catalyzes the transfer of the enolpyruvyl moiety of phosphoenolpyruvate (PEP) to the 5-hydroxyl of shikimate-3-phosphate (S3P) to produce enolpyruvyl shikimate-3-phosphate and inorganic phosphate. The chain is 3-phosphoshikimate 1-carboxyvinyltransferase from Haemophilus influenzae (strain 86-028NP).